Here is a 162-residue protein sequence, read N- to C-terminus: Peptidyl-prolyl cis-trans isomerase-like 1 (162 aa).

A PPIase cyclophilin-type domain is found at 1-155 (MATDVTFDTS…DEVKILRAKV (155 aa)).

Belongs to the cyclophilin-type PPIase family. PPIL1 subfamily.

It carries out the reaction [protein]-peptidylproline (omega=180) = [protein]-peptidylproline (omega=0). PPIases accelerate the folding of proteins. It catalyzes the cis-trans isomerization of proline imidic peptide bonds in oligopeptides. This Emericella nidulans (strain FGSC A4 / ATCC 38163 / CBS 112.46 / NRRL 194 / M139) (Aspergillus nidulans) protein is Peptidyl-prolyl cis-trans isomerase-like 1 (cyp1).